The following is a 389-amino-acid chain: Glutaryl-CoA dehydrogenase (389 aa).

Substrate is bound by residues R87 and N91. FAD is bound by residues 126–129 (FGIT), S135, and 159–161 (WIS). Substrate is bound at residue S135. S181 contributes to the substrate binding site. Residues R271, 281–284 (FQMN), R340, A344, and 367–371 (EGSAN) each bind FAD. The active-site Proton acceptor is E367. R385 is a binding site for substrate.

Belongs to the acyl-CoA dehydrogenase family. In terms of assembly, homotetramer. Requires FAD as cofactor.

It carries out the reaction glutaryl-CoA + A = (2E)-glutaconyl-CoA + AH2. Its pathway is aromatic compound metabolism; benzoyl-CoA degradation. Inhibited by glutaconyl-CoA. Its function is as follows. Catalyzes the dehydrogenation of Glutaryl-CoA to glutaconyl-CoA. The protein is Glutaryl-CoA dehydrogenase (Acd) of Desulfococcus multivorans.